We begin with the raw amino-acid sequence, 79 residues long: Conotoxin VnMEKL-024 (79 aa).

Positions M1–A19 are cleaved as a signal peptide. The propeptide occupies L20–E50. 3 disulfides stabilise this stretch: C51/C65, C58/C69, and C64/C76.

The protein belongs to the conotoxin O2 superfamily. In terms of tissue distribution, expressed by the venom duct.

The protein localises to the secreted. The sequence is that of Conotoxin VnMEKL-024 from Conus ventricosus (Mediterranean cone).